A 70-amino-acid chain; its full sequence is DNA gyrase inhibitor YacG (70 aa).

Residues Cys-9, Cys-12, Cys-28, and Cys-32 each coordinate Zn(2+). A disordered region spans residues 43 to 70; the sequence is ESRKIPGSSIDPESIVTTNNKQDNVDEQ.

This sequence belongs to the DNA gyrase inhibitor YacG family. In terms of assembly, interacts with GyrB. The cofactor is Zn(2+).

Inhibits all the catalytic activities of DNA gyrase by preventing its interaction with DNA. Acts by binding directly to the C-terminal domain of GyrB, which probably disrupts DNA binding by the gyrase. The protein is DNA gyrase inhibitor YacG of Legionella pneumophila (strain Corby).